An 80-amino-acid polypeptide reads, in one-letter code: Exodeoxyribonuclease 7 small subunit (80 aa).

It belongs to the XseB family. As to quaternary structure, heterooligomer composed of large and small subunits.

Its subcellular location is the cytoplasm. The enzyme catalyses Exonucleolytic cleavage in either 5'- to 3'- or 3'- to 5'-direction to yield nucleoside 5'-phosphates.. In terms of biological role, bidirectionally degrades single-stranded DNA into large acid-insoluble oligonucleotides, which are then degraded further into small acid-soluble oligonucleotides. This chain is Exodeoxyribonuclease 7 small subunit, found in Lactobacillus helveticus (strain DPC 4571).